We begin with the raw amino-acid sequence, 847 residues long: Ras GTPase-activating protein 2 (847 aa).

Over residues 1 to 21 (MAAAAPAAAASPEAPAVSGSA) the composition is skewed to low complexity. The segment at 1–31 (MAAAAPAAAASPEAPAVSGSADPETGDEDSR) is disordered. At Ala2 the chain carries N-acetylalanine. C2 domains lie at 19-137 (GSAD…ETWF) and 148-288 (VQGK…QAWY). Residues 371–588 (NKLVPFITAV…TDVKKFLDEI (218 aa)) enclose the Ras-GAP domain. Ser554 carries the post-translational modification Phosphoserine. Residues 603-704 (VHLKEGEMYK…WIDVLCRVSR (102 aa)) form the PH domain. The segment at 706-742 (NHNRLSSFHPSAYLNGNWLCCQETSESTPGCKPCTAG) adopts a Btk-type zinc-finger fold. 4 residues coordinate Zn(2+): His714, Cys725, Cys726, and Cys736. The segment at 819–847 (DEPHEKYRKKRSSSAKYGSKENPIVGKIS) is disordered.

The protein resides in the cell membrane. Its function is as follows. Inhibitory regulator of the Ras-cyclic AMP pathway. Binds inositol tetrakisphosphate (IP4) and phospholipids. The protein is Ras GTPase-activating protein 2 (Rasa2) of Mus musculus (Mouse).